Reading from the N-terminus, the 658-residue chain is Carnitine O-palmitoyltransferase 2, mitochondrial (658 aa).

The transit peptide at 1–25 (MVPRLLLRAWPRGPAVGPGAPSRPL) directs the protein to the mitochondrion. The Mitochondrial matrix portion of the chain corresponds to 26-178 (SAGSGPGQYL…GLLEPEVFHL (153 aa)). K69 carries the N6-succinyllysine modification. K79 bears the N6-acetyllysine mark. Residue K85 is modified to N6-succinyllysine. The segment at residues 179–208 (NPAKSDTITFKRLIRFVPSSLSWYGAYLVN) is an intramembrane region (note=Mitochondrial inner membrane). The Mitochondrial matrix segment spans residues 209 to 658 (AYPLDMSQYF…DALEGKSIKS (450 aa)). An N6-acetyllysine; alternate modification is found at K239. At K239 the chain carries N6-succinyllysine; alternate. Position 305 is an N6-acetyllysine (K305). Catalysis depends on H372, which acts as the Proton acceptor. K424 and K439 each carry N6-succinyllysine. A CoA-binding site is contributed by 452–464 (GKEFLKKQKLSPD). 3 residues coordinate (R)-carnitine: Y486, S488, and T499. N6-acetyllysine; alternate is present on residues K510 and K544. K510 and K544 each carry N6-succinyllysine; alternate.

The protein belongs to the carnitine/choline acetyltransferase family.

It is found in the mitochondrion inner membrane. It catalyses the reaction (R)-carnitine + hexadecanoyl-CoA = O-hexadecanoyl-(R)-carnitine + CoA. The enzyme catalyses octanoyl-CoA + (R)-carnitine = O-octanoyl-(R)-carnitine + CoA. The catalysed reaction is decanoyl-CoA + (R)-carnitine = O-decanoyl-(R)-carnitine + CoA. It carries out the reaction dodecanoyl-CoA + (R)-carnitine = O-dodecanoyl-R-carnitine + CoA. It catalyses the reaction tetradecanoyl-CoA + (R)-carnitine = O-tetradecanoyl-(R)-carnitine + CoA. The enzyme catalyses (R)-carnitine + octadecanoyl-CoA = O-octadecanoyl-(R)-carnitine + CoA. The catalysed reaction is eicosanoyl-CoA + (R)-carnitine = O-eicosanoyl-(R)-carnitine + CoA. It carries out the reaction (9Z)-tetradecenoyl-CoA + (R)-carnitine = O-(9Z)-tetradecenoyl-(R)-carnitine + CoA. It catalyses the reaction (5Z)-tetradecenoyl-CoA + (R)-carnitine = O-(5Z)-tetradecenoyl-(R)-carnitine + CoA. The enzyme catalyses (R)-carnitine + (9Z)-octadecenoyl-CoA = O-(9Z)-octadecenoyl-(R)-carnitine + CoA. The catalysed reaction is 4,8-dimethylnonanoyl-CoA + (R)-carnitine = O-4,8-dimethylnonanoyl-(R)-carnitine + CoA. It functions in the pathway lipid metabolism; fatty acid beta-oxidation. Inhibited by trans-2-hexadecanoyl-CoA. Involved in the intramitochondrial synthesis of acylcarnitines from accumulated acyl-CoA metabolites. Reconverts acylcarnitines back into the respective acyl-CoA esters that can then undergo beta-oxidation, an essential step for the mitochondrial uptake of long-chain fatty acids and their subsequent beta-oxidation in the mitochondrion. Active with medium (C8-C12) and long-chain (C14-C18) acyl-CoA esters. The sequence is that of Carnitine O-palmitoyltransferase 2, mitochondrial from Homo sapiens (Human).